The primary structure comprises 262 residues: Acyl-[acyl-carrier-protein]--UDP-N-acetylglucosamine O-acyltransferase (262 aa).

The protein belongs to the transferase hexapeptide repeat family. LpxA subfamily. As to quaternary structure, homotrimer.

It is found in the cytoplasm. The enzyme catalyses a (3R)-hydroxyacyl-[ACP] + UDP-N-acetyl-alpha-D-glucosamine = a UDP-3-O-[(3R)-3-hydroxyacyl]-N-acetyl-alpha-D-glucosamine + holo-[ACP]. It functions in the pathway glycolipid biosynthesis; lipid IV(A) biosynthesis; lipid IV(A) from (3R)-3-hydroxytetradecanoyl-[acyl-carrier-protein] and UDP-N-acetyl-alpha-D-glucosamine: step 1/6. Functionally, involved in the biosynthesis of lipid A, a phosphorylated glycolipid that anchors the lipopolysaccharide to the outer membrane of the cell. This chain is Acyl-[acyl-carrier-protein]--UDP-N-acetylglucosamine O-acyltransferase, found in Vibrio atlanticus (strain LGP32) (Vibrio splendidus (strain Mel32)).